A 724-amino-acid chain; its full sequence is Palmitoyltransferase AKR1 (724 aa).

Residues M1–P308 are Cytoplasmic-facing. ANK repeat units lie at residues P54–A84, E90–I119, L124–I153, Q157–S187, T191–V220, and G224–L253. The chain crosses the membrane as a helical span at residues W309–L329. The Lumenal segment spans residues G330–C331. Residues L332–L352 traverse the membrane as a helical segment. Topologically, residues M353–K360 are cytoplasmic. The helical transmembrane segment at T361–F381 threads the bilayer. Topologically, residues K382–P392 are lumenal. Residues I393–L413 form a helical membrane-spanning segment. Topologically, residues Q414–K489 are cytoplasmic. The DHHC domain occupies H446–L496. The active-site S-palmitoyl cysteine intermediate is the C476. Residues I490–L510 form a helical membrane-spanning segment. Topologically, residues E511 to P543 are lumenal. A helical transmembrane segment spans residues F544–F564. At V565–V724 the chain is on the cytoplasmic side.

The protein belongs to the DHHC palmitoyltransferase family. AKR/ZDHHC17 subfamily.

It localises to the early endosome membrane. The protein localises to the golgi apparatus membrane. The catalysed reaction is L-cysteinyl-[protein] + hexadecanoyl-CoA = S-hexadecanoyl-L-cysteinyl-[protein] + CoA. Palmitoyltransferase specific for casein kinase 1. This chain is Palmitoyltransferase AKR1 (AKR1), found in Eremothecium gossypii (strain ATCC 10895 / CBS 109.51 / FGSC 9923 / NRRL Y-1056) (Yeast).